We begin with the raw amino-acid sequence, 485 residues long: Peroxisomal catalase (485 aa).

Residues histidine 53 and asparagine 126 contribute to the active site. Tyrosine 336 is a heme binding site.

This sequence belongs to the catalase family. In terms of assembly, homotetramer. The cofactor is heme.

The protein resides in the peroxisome matrix. It catalyses the reaction 2 H2O2 = O2 + 2 H2O. Its function is as follows. Catalyzes the degradation of hydrogen peroxide (H(2)O(2)) generated by peroxisomal oxidases to water and oxygen, thereby protecting cells from the toxic effects of hydrogen peroxide. This chain is Peroxisomal catalase (CAT1), found in Candida albicans (strain SC5314 / ATCC MYA-2876) (Yeast).